We begin with the raw amino-acid sequence, 292 residues long: Shikimate dehydrogenase (NADP(+)) (292 aa).

Shikimate contacts are provided by residues 22–24 (SLS) and serine 69. Residue lysine 73 is the Proton acceptor of the active site. Residues asparagine 94 and aspartate 111 each contribute to the shikimate site. Residues 135–139 (GVGGA) and isoleucine 236 each bind NADP(+). Tyrosine 238 is a shikimate binding site. Glycine 260 contributes to the NADP(+) binding site.

It belongs to the shikimate dehydrogenase family. In terms of assembly, homodimer.

It catalyses the reaction shikimate + NADP(+) = 3-dehydroshikimate + NADPH + H(+). It participates in metabolic intermediate biosynthesis; chorismate biosynthesis; chorismate from D-erythrose 4-phosphate and phosphoenolpyruvate: step 4/7. Its function is as follows. Involved in the biosynthesis of the chorismate, which leads to the biosynthesis of aromatic amino acids. Catalyzes the reversible NADPH linked reduction of 3-dehydroshikimate (DHSA) to yield shikimate (SA). The polypeptide is Shikimate dehydrogenase (NADP(+)) (Streptococcus pyogenes serotype M2 (strain MGAS10270)).